The sequence spans 224 residues: MAAQNKAMSGNRMLVFVPPHPLIKHWVSVLRNEQTPCPIFRNAMSELGRLLMYEASRDWLPIITGEIQSPMGVASVEFVDPREPVAIVPILRAGLALAEHASSILPATKTYHLGISRNEETLQPSVYLNKLPDKFPEGSRVIVVDPMLATGGTIVAAIDLIKERGVDNSQIKVICAVGAPPALQKLSEKFPGLHVYAGILDPTVNDKGFIIPGLGDAGDRSFGT.

Arg92 provides a ligand contact to 5-phospho-alpha-D-ribose 1-diphosphate. Lys109 is a GTP binding site. Residues Arg117 and 145 to 153 (DPMLATGGT) each bind 5-phospho-alpha-D-ribose 1-diphosphate. Uracil contacts are provided by residues Ile210 and 215–217 (GDA). Asp216 is a 5-phospho-alpha-D-ribose 1-diphosphate binding site.

The protein belongs to the UPRTase family. The cofactor is Mg(2+).

It carries out the reaction UMP + diphosphate = 5-phospho-alpha-D-ribose 1-diphosphate + uracil. The protein operates within pyrimidine metabolism; UMP biosynthesis via salvage pathway; UMP from uracil: step 1/1. With respect to regulation, allosterically activated by GTP. Functionally, catalyzes the conversion of uracil and 5-phospho-alpha-D-ribose 1-diphosphate (PRPP) to UMP and diphosphate. This chain is Uracil phosphoribosyltransferase (UPP), found in Nicotiana tabacum (Common tobacco).